A 93-amino-acid polypeptide reads, in one-letter code: MKLAITIILVMLSVCYSSDTCPGFLQVLEYLFMGSESTYEAALKFYNPGSDLQNSGMQLKKLVDTLPEKTRVNIVKLSEIILTSNLCNQDPSF.

The signal sequence occupies residues 1–17 (MKLAITIILVMLSVCYS).

Belongs to the secretoglobin family. As to quaternary structure, antiparallel homodimer; disulfide-linked. Interaction with LMBR1L is controversial.

It localises to the secreted. Binds phosphatidylcholine, phosphatidylinositol, polychlorinated biphenyls (PCB) and weakly progesterone, potent inhibitor of phospholipase A2. The chain is Uteroglobin (SCGB1A1) from Neotomodon alstoni (Mexican volcano mouse).